Consider the following 459-residue polypeptide: Glycosyl hydrolase family 109 protein (459 aa).

Positions 1-31 form a signal peptide, tat-type signal; the sequence is MHNIHRRNFLKAAGAATAGLVTANIALNAYA. Residues 64 to 65, aspartate 86, 135 to 138, 155 to 156, and asparagine 184 each bind NAD(+); these read ER, WEWH, and EV. Residues tyrosine 213, arginine 232, 244–247, and tyrosine 326 contribute to the substrate site; that span reads YPTH. Tyrosine 244 serves as a coordination point for NAD(+).

Belongs to the Gfo/Idh/MocA family. Glycosyl hydrolase 109 subfamily. NAD(+) serves as cofactor. Post-translationally, predicted to be exported by the Tat system. The position of the signal peptide cleavage has not been experimentally proven.

In terms of biological role, glycosidase. In Shewanella baltica (strain OS195), this protein is Glycosyl hydrolase family 109 protein.